A 68-amino-acid chain; its full sequence is Putative membrane protein insertion efficiency factor (68 aa).

Belongs to the UPF0161 family.

Its subcellular location is the cell inner membrane. Its function is as follows. Could be involved in insertion of integral membrane proteins into the membrane. The protein is Putative membrane protein insertion efficiency factor of Persephonella marina (strain DSM 14350 / EX-H1).